The sequence spans 161 residues: Transcriptional repressor NrdR (161 aa).

Residues 3–34 fold into a zinc finger; the sequence is CPYCGARDARVIDSRELNGGESIRRRRECIAC. The region spanning 49–139 is the ATP-cone domain; that stretch reads LMVVKRDGRR…VYRRFADLED (91 aa).

Belongs to the NrdR family. Zn(2+) is required as a cofactor.

Its function is as follows. Negatively regulates transcription of bacterial ribonucleotide reductase nrd genes and operons by binding to NrdR-boxes. In Thermomicrobium roseum (strain ATCC 27502 / DSM 5159 / P-2), this protein is Transcriptional repressor NrdR.